A 290-amino-acid chain; its full sequence is 33 kDa chaperonin (290 aa).

2 disulfide bridges follow: Cys235–Cys237 and Cys268–Cys271.

It belongs to the HSP33 family. Under oxidizing conditions two disulfide bonds are formed involving the reactive cysteines. Under reducing conditions zinc is bound to the reactive cysteines and the protein is inactive.

The protein localises to the cytoplasm. Redox regulated molecular chaperone. Protects both thermally unfolding and oxidatively damaged proteins from irreversible aggregation. Plays an important role in the bacterial defense system toward oxidative stress. This Streptococcus equi subsp. zooepidemicus (strain H70) protein is 33 kDa chaperonin.